The primary structure comprises 395 residues: S-adenosylmethionine synthase (395 aa).

Histidine 16 provides a ligand contact to ATP. A Mg(2+)-binding site is contributed by aspartate 18. Residue glutamate 44 participates in K(+) binding. The L-methionine site is built by glutamate 57 and glutamine 100. A flexible loop region spans residues 100–110; the sequence is QSPDIAQGVDD. Residues 174-176, 241-242, aspartate 250, 256-257, alanine 273, and lysine 277 each bind ATP; these read DAK, RF, and RK. Aspartate 250 contributes to the L-methionine binding site. Lysine 281 provides a ligand contact to L-methionine.

It belongs to the AdoMet synthase family. In terms of assembly, homotetramer; dimer of dimers. Requires Mg(2+) as cofactor. K(+) is required as a cofactor.

It is found in the cytoplasm. The catalysed reaction is L-methionine + ATP + H2O = S-adenosyl-L-methionine + phosphate + diphosphate. The protein operates within amino-acid biosynthesis; S-adenosyl-L-methionine biosynthesis; S-adenosyl-L-methionine from L-methionine: step 1/1. Its function is as follows. Catalyzes the formation of S-adenosylmethionine (AdoMet) from methionine and ATP. The overall synthetic reaction is composed of two sequential steps, AdoMet formation and the subsequent tripolyphosphate hydrolysis which occurs prior to release of AdoMet from the enzyme. This Lactiplantibacillus plantarum (strain ATCC BAA-793 / NCIMB 8826 / WCFS1) (Lactobacillus plantarum) protein is S-adenosylmethionine synthase.